We begin with the raw amino-acid sequence, 648 residues long: Translation factor GUF1 homolog, mitochondrial (648 aa).

The region spanning glutamate 55–proline 247 is the tr-type G domain. GTP is bound by residues alanine 64 to serine 71, aspartate 140 to histidine 144, and asparagine 194 to aspartate 197.

The protein belongs to the TRAFAC class translation factor GTPase superfamily. Classic translation factor GTPase family. LepA subfamily.

Its subcellular location is the mitochondrion inner membrane. The catalysed reaction is GTP + H2O = GDP + phosphate + H(+). Promotes mitochondrial protein synthesis. May act as a fidelity factor of the translation reaction, by catalyzing a one-codon backward translocation of tRNAs on improperly translocated ribosomes. Binds to mitochondrial ribosomes in a GTP-dependent manner. The sequence is that of Translation factor GUF1 homolog, mitochondrial from Oryza sativa subsp. indica (Rice).